Consider the following 254-residue polypeptide: Probable transcriptional regulatory protein Saro_0419 (254 aa).

Residues 1-14 (MAGHSKFKNIMHRK) are compositionally biased toward basic residues. Residues 1 to 22 (MAGHSKFKNIMHRKGAQDKKRS) are disordered.

The protein belongs to the TACO1 family.

It is found in the cytoplasm. This Novosphingobium aromaticivorans (strain ATCC 700278 / DSM 12444 / CCUG 56034 / CIP 105152 / NBRC 16084 / F199) protein is Probable transcriptional regulatory protein Saro_0419.